Here is a 217-residue protein sequence, read N- to C-terminus: Vesicle transport through interaction with t-SNAREs homolog 1A (217 aa).

Topologically, residues methionine 1–asparagine 192 are cytoplasmic. The stretch at alanine 36–asparagine 97 forms a coiled coil. A disordered region spans residues leucine 90–glutamine 109. The region spanning serine 123–isoleucine 185 is the t-SNARE coiled-coil homology domain. The helical; Anchor for type IV membrane protein transmembrane segment at lysine 193 to leucine 213 threads the bilayer. Residues lysine 214 to arginine 217 lie on the Vesicular side of the membrane.

The protein belongs to the VTI1 family. Component of the SNARE complex composed of syn7A, syn8A, vamp7A and vti1A.

Its subcellular location is the membrane. It is found in the cytoplasmic vesicle. The protein resides in the secretory vesicle membrane. It localises to the clathrin-coated vesicle membrane. The protein localises to the endosome membrane. Its subcellular location is the endoplasmic reticulum membrane. Functionally, V-SNARE that mediates vesicle transport pathways through interactions with t-SNAREs on the target membrane. These interactions are proposed to mediate aspects of the specificity of vesicle trafficking and to promote fusion of the lipid bilayers. The chain is Vesicle transport through interaction with t-SNAREs homolog 1A from Dictyostelium discoideum (Social amoeba).